A 129-amino-acid polypeptide reads, in one-letter code: Small ribosomal subunit protein uS11 (129 aa).

It belongs to the universal ribosomal protein uS11 family. Part of the 30S ribosomal subunit. Interacts with proteins S7 and S18. Binds to IF-3.

In terms of biological role, located on the platform of the 30S subunit, it bridges several disparate RNA helices of the 16S rRNA. Forms part of the Shine-Dalgarno cleft in the 70S ribosome. This is Small ribosomal subunit protein uS11 from Erwinia tasmaniensis (strain DSM 17950 / CFBP 7177 / CIP 109463 / NCPPB 4357 / Et1/99).